The following is a 786-amino-acid chain: MNDRVLRVLEFNKIKELVKGYAITKSAKEMVLDLKPYDSVYDVKEHLEETKEALDILMRKGNPPFEGLYDVKEAITRAEKGGVLSIEGLLRIGNMLAVTRKLSDFLARKEEEEEHRILEGMREGLIVLRGVESAISKAIVSEDEIADSASDKLYSIRRSLKEKNSSIRDKVNSIVRSNTQYLQDSLYTVRGDRYVIPVKAEYKSQVPGLVHDQSSTGATLFIEPTALVNLNNEIKELMLKERAEIERILAELSVLVYKNIDVIKVNFNIIVELDFIFAKAKYGSDLGGTLPIVNEEGVIDLMDARHPLIPKDKVVSSDIYLGREFSTLLITGPNTGGKTVTLKTTGLIELMGLSGLLIPASENSSISFFEEIFADIGDEQSIEQSLSTFSSHMTNIVRIMEKANNKSFVLFDELGAGTDPTEGAALAISILENLRARGCRIMSTTHYSELKGYALKTENVENASVEFNVETLRPTYRLLIGVPGKSNAFEISRRLGLKDNVIEEAKKVISTESLQFEDLIQSLQEKSIKAENDAREAAILRNDAEKYKNRYKEKFERIESVRDNVYADARREAKQILDSAKEEADAILKNMRDLERMGISSDARRKLEAERGKLRDKISDAEARLQKKKEEQKGEELKKIEVGMEALLPSINQKVIVLSKPDNKGEVQVQAGIMKINVKAKDLRVAKETKEEKKIKKREARLNLRQVDPSIDLRGMDSEEACYTADKYLDDAYVAGRGEVTLVHGKGTGVLRKAINDMLKKHPHVKSHRLGEYGEGGTGVTVVILK.

332–339 (GPNTGGKT) serves as a coordination point for ATP. Residues 711-786 (IDLRGMDSEE…GTGVTVVILK (76 aa)) enclose the Smr domain.

The protein belongs to the DNA mismatch repair MutS family. MutS2 subfamily. As to quaternary structure, homodimer. Binds to stalled ribosomes, contacting rRNA.

In terms of biological role, endonuclease that is involved in the suppression of homologous recombination and thus may have a key role in the control of bacterial genetic diversity. Acts as a ribosome collision sensor, splitting the ribosome into its 2 subunits. Detects stalled/collided 70S ribosomes which it binds and splits by an ATP-hydrolysis driven conformational change. Acts upstream of the ribosome quality control system (RQC), a ribosome-associated complex that mediates the extraction of incompletely synthesized nascent chains from stalled ribosomes and their subsequent degradation. Probably generates substrates for RQC. In Clostridium perfringens (strain 13 / Type A), this protein is Endonuclease MutS2.